We begin with the raw amino-acid sequence, 535 residues long: GMP synthase [glutamine-hydrolyzing] (535 aa).

The region spanning 24-217 (KILIVDFGSQ…VRNISGLGGD (194 aa)) is the Glutamine amidotransferase type-1 domain. The active-site Nucleophile is the cysteine 101. Residues histidine 191 and glutamate 193 contribute to the active site. Positions 218 to 410 (WTMHAFREEE…LGLPDVFVGR (193 aa)) constitute a GMPS ATP-PPase domain. 245–251 (SGGVDSA) provides a ligand contact to ATP.

As to quaternary structure, homodimer.

It carries out the reaction XMP + L-glutamine + ATP + H2O = GMP + L-glutamate + AMP + diphosphate + 2 H(+). The protein operates within purine metabolism; GMP biosynthesis; GMP from XMP (L-Gln route): step 1/1. Functionally, catalyzes the synthesis of GMP from XMP. The polypeptide is GMP synthase [glutamine-hydrolyzing] (Bradyrhizobium sp. (strain ORS 278)).